The chain runs to 668 residues: Putative ankyrin repeat protein FPV244 (668 aa).

ANK repeat units follow at residues 40-69, 144-173, 177-206, 210-239, 272-302, 306-336, 340-370, 374-403, 407-437, 441-471, 473-502, and 571-602; these read IPFT…KLIY, EYMK…DVNA, YCRT…DVNI, DDLS…NINK, YKNT…DVNA, KGET…DVNA, LYIT…NVNA, CDKT…DIEA, KIGT…NVNS, YLST…DVNA, NIRN…ELRD, and NMFY…EINT.

The protein is Putative ankyrin repeat protein FPV244 of Vertebrata (FPV).